The following is a 215-amino-acid chain: Ribose-5-phosphate isomerase A (215 aa).

Substrate is bound by residues 26–29, 79–82, and 92–95; these read TGST, DGAD, and KGGG. Glu-101 acts as the Proton acceptor in catalysis. Lys-119 serves as a coordination point for substrate.

It belongs to the ribose 5-phosphate isomerase family. In terms of assembly, homodimer.

The catalysed reaction is aldehydo-D-ribose 5-phosphate = D-ribulose 5-phosphate. Its pathway is carbohydrate degradation; pentose phosphate pathway; D-ribose 5-phosphate from D-ribulose 5-phosphate (non-oxidative stage): step 1/1. Its function is as follows. Catalyzes the reversible conversion of ribose-5-phosphate to ribulose 5-phosphate. This Xylella fastidiosa (strain M12) protein is Ribose-5-phosphate isomerase A.